Here is a 1049-residue protein sequence, read N- to C-terminus: Toll-like receptor 7 (1049 aa).

The signal sequence occupies residues 1-26; the sequence is MVFPMWTLKRQILILFNIILISKLLG. Topologically, residues 27 to 839 are extracellular; the sequence is ARWFPKTLPC…LYTCELDLTN (813 aa). 6 LRR repeats span residues 43-64, 65-87, 110-126, 127-149, 151-170, and 171-195; these read PKNH…GGIP, TNTT…SFHR, NMCI…FSGL, TYLK…LPPS, QLLS…NLTE, and LANI…SYSI. Residues N66 and N69 are each glycosylated (N-linked (GlcNAc...) asparagine). A glycan (N-linked (GlcNAc...) asparagine) is linked at N167. Residues N202 and N215 are each glycosylated (N-linked (GlcNAc...) asparagine). LRR repeat units follow at residues 203–226, 228–247, 248–275, 289–312, 314–337, 339–368, 369–392, 396–419, and 421–443; these read LTKL…LPST, TELY…DFNN, LNQL…PCKN, LTEL…WFKN, NKLQ…KFLH, LPSL…AFSS, LKSL…NLSP, LQNL…MFKQ, and KRLK…SEVG. N-linked (GlcNAc...) asparagine glycosylation is present at N361. A glycan (N-linked (GlcNAc...) asparagine) is linked at N413. N-linked (GlcNAc...) asparagine glycosylation occurs at N488. 4 LRR repeats span residues 492–515, 516–540, 541–564, and 566–588; these read YKYG…DFQH, LSFL…EFQP, LAEL…AFEE, and HKLE…ITHM. N523 and N534 each carry an N-linked (GlcNAc...) asparagine glycan. The N-linked (GlcNAc...) asparagine glycan is linked to N590. LRR repeat units lie at residues 595-618, 619-644, 649-672, 674-697, 698-721, 723-745, 746-769, and 772-795; these read LKVL…TMES, ESLR…RYLQ, LLKL…VFDG, PPNL…KLQC, LKNL…LSNC, RSLK…FLQD, AFQL…SFPE, and LNNL…VWFV. Residues N679 and N720 are each glycosylated (N-linked (GlcNAc...) asparagine). Residue N799 is glycosylated (N-linked (GlcNAc...) asparagine). Residues 840–860 form a helical membrane-spanning segment; it reads LILFSLSISVSLFLMVMMTAS. At 861–1049 the chain is on the cytoplasmic side; sequence HLYFWDVWYI…AYSQVFKETV (189 aa). The TIR domain maps to 889–1033; the sequence is CCYDAFIVYD…YFWQCLKNAL (145 aa).

It belongs to the Toll-like receptor family. As to quaternary structure, homodimer. Interacts with MYD88 via their respective TIR domains. Interacts with UNC93B1. Interacts with SMPDL3B. In terms of tissue distribution, detected in brain, placenta, spleen, stomach, small intestine, lung and in plasmacytoid pre-dendritic cells. Expressed in peripheral mononuclear blood cells.

The protein localises to the endoplasmic reticulum membrane. Its subcellular location is the endosome. The protein resides in the lysosome. It is found in the cytoplasmic vesicle. It localises to the phagosome. Its activity is regulated as follows. Activated by guanosine analogs including deoxyguanosine, 7-thia-8-oxoguanosine or 7-deazaguanosine in a RNA-independent manner. Activated by imiquimod. Functionally, endosomal receptor that plays a key role in innate and adaptive immunity. Controls host immune response against pathogens through recognition of uridine-containing single strand RNAs (ssRNAs) of viral origin or guanosine analogs. Upon binding to agonists, undergoes dimerization that brings TIR domains from the two molecules into direct contact, leading to the recruitment of TIR-containing downstream adapter MYD88 through homotypic interaction. In turn, the Myddosome signaling complex is formed involving IRAK4, IRAK1, TRAF6, TRAF3 leading to activation of downstream transcription factors NF-kappa-B and IRF7 to induce pro-inflammatory cytokines and interferons, respectively. In plasmacytoid dendritic cells, RNASET2 endonuclease cooperates with PLD3 or PLD4 5'-&gt;3' exonucleases to process RNA and release 2',3'-cyclic guanosine monophosphate (2',3'-cGMP) and cytidine-rich RNA fragments that occupy TLR7 ligand-binding pockets and trigger a signaling-competent state. This chain is Toll-like receptor 7, found in Homo sapiens (Human).